We begin with the raw amino-acid sequence, 262 residues long: Ribonuclease 3 (262 aa).

The 124-residue stretch at Leu-18 to Gly-141 folds into the RNase III domain. Glu-59 is a binding site for Mg(2+). Residue Asp-63 is part of the active site. Mg(2+)-binding residues include Asp-127 and Glu-130. Glu-130 is a catalytic residue.

The protein belongs to the ribonuclease III family. Homodimer. The cofactor is Mg(2+).

The protein localises to the cytoplasm. It carries out the reaction Endonucleolytic cleavage to 5'-phosphomonoester.. In terms of biological role, digests double-stranded RNA. Involved in the processing of primary rRNA transcript to yield the immediate precursors to the large and small rRNAs (23S and 16S). Processes some mRNAs, and tRNAs when they are encoded in the rRNA operon. Processes pre-crRNA and tracrRNA of type II CRISPR loci if present in the organism. The sequence is that of Ribonuclease 3 from Mycoplasma genitalium (strain ATCC 33530 / DSM 19775 / NCTC 10195 / G37) (Mycoplasmoides genitalium).